The chain runs to 445 residues: UPF0210 protein SPH_0352 (445 aa).

The protein belongs to the UPF0210 family. As to quaternary structure, homodimer.

The protein is UPF0210 protein SPH_0352 of Streptococcus pneumoniae (strain Hungary19A-6).